We begin with the raw amino-acid sequence, 716 residues long: MNPITKQFQYGQHTVTLETGVIARQATASVLASIDDTTVLVTVVAKKEAREGQNFFPLTVNYQEKTYAAGKIPGGFFKREGRPSENETLTCRLIDRPIRPLFPDGFMNEVQVVATVVSVNPQINPDIVALIGTSAALSISGVPFAGPIGAARVGVVNDEYVLNPTADELENSKLDLVVAGTDKAVLMVESEAQLLSEDQMLGAVMYGHEAMQDVIKAITEFTAEAGKEKWDWQAPAKDESLQTKIRELAEQGIGEAYRTTDKAERKGKLDQVKEQMVEKLTAEDENVDLEESGKIFHDLESDIVRSRIIAGEKRIDGRDPDMVRAISVATGVLPRTHGSALFTRGETQALVTATLGTDRDAQMIDELTGMNTNRFMLHYNFPPYCVGETGMVGSPKRREIGHGRLAKRGIQAVMPSHDEFPYTIRVVSEITESNGSSSMASVCGSSLALMDAGVPIKSSVAGIAMGLVKEGDKHVVLSDILGDEDHLGDMDFKVAGNTDGITALQMDIKIDGITRDIMESALAQAKSARLHILKVMDEAIGGHREELSTYAPRFTTIKIDQDKIKDVIGKGGAVIRELTESTNTNIEIGDDGTIKVAASDQADADAAIEKIKQLTANVEVGKIYQGKVARIVDFGAFVTVLPGKDGLVHISQIAEERVNDVNEYLKVGDVVPVKVLEIDRQGRVRLSMKEAAEKKEEPAPEAPAEPAAEEENKSEE.

Mg(2+)-binding residues include Asp-485 and Asp-491. A KH domain is found at 552–611 (PRFTTIKIDQDKIKDVIGKGGAVIRELTESTNTNIEIGDDGTIKVAASDQADADAAIEKI). In terms of domain architecture, S1 motif spans 621–689 (GKIYQGKVAR…RQGRVRLSMK (69 aa)). The segment covering 689 to 698 (KEAAEKKEEP) has biased composition (basic and acidic residues). The tract at residues 689-716 (KEAAEKKEEPAPEAPAEPAAEEENKSEE) is disordered. Residues 707-716 (AAEEENKSEE) show a composition bias toward acidic residues.

It belongs to the polyribonucleotide nucleotidyltransferase family. As to quaternary structure, component of the RNA degradosome, which is a multiprotein complex involved in RNA processing and mRNA degradation. It depends on Mg(2+) as a cofactor.

It localises to the cytoplasm. The catalysed reaction is RNA(n+1) + phosphate = RNA(n) + a ribonucleoside 5'-diphosphate. In terms of biological role, involved in mRNA degradation. Catalyzes the phosphorolysis of single-stranded polyribonucleotides processively in the 3'- to 5'-direction. The chain is Polyribonucleotide nucleotidyltransferase from Idiomarina loihiensis (strain ATCC BAA-735 / DSM 15497 / L2-TR).